The primary structure comprises 193 residues: Thymidine kinase (193 aa).

ATP-binding positions include 15 to 22 (GCMYSGKT) and 87 to 90 (DELH). The active-site Proton acceptor is the Glu88. The Zn(2+) site is built by Cys147, Cys150, Cys185, and Cys188.

This sequence belongs to the thymidine kinase family. Homotetramer.

Its subcellular location is the cytoplasm. It catalyses the reaction thymidine + ATP = dTMP + ADP + H(+). The polypeptide is Thymidine kinase (Chloroflexus aurantiacus (strain ATCC 29366 / DSM 635 / J-10-fl)).